The sequence spans 1021 residues: tRNA wybutosine-synthesizing protein 4 (1021 aa).

Residues Arg-68, Asp-122, Asp-171–Leu-172, and Glu-198 each bind S-adenosyl-L-methionine. Residues Pro-826–Arg-980 enclose the JmjC domain.

Belongs to the methyltransferase superfamily. LCMT family.

It carries out the reaction 7-[(3S)-3-amino-3-carboxypropyl]wyosine(37) in tRNA(Phe) + S-adenosyl-L-methionine = 7-[(3S)-(3-amino-3-methoxycarbonyl)propyl]wyosine(37) in tRNA(Phe) + S-adenosyl-L-homocysteine. The catalysed reaction is 7-[(3S)-(3-amino-3-methoxycarbonyl)propyl]wyosine(37) in tRNA(Phe) + S-adenosyl-L-methionine + CO2 = wybutosine(37) in tRNA(Phe) + S-adenosyl-L-homocysteine + 2 H(+). It participates in tRNA modification; wybutosine-tRNA(Phe) biosynthesis. In terms of biological role, probable S-adenosyl-L-methionine-dependent methyltransferase that acts as a component of the wybutosine biosynthesis pathway. Wybutosine is a hyper modified guanosine with a tricyclic base found at the 3'-position adjacent to the anticodon of eukaryotic phenylalanine tRNA. May methylate the carboxyl group of leucine residues to form alpha-leucine ester residues. The chain is tRNA wybutosine-synthesizing protein 4 (PPM2) from Gibberella zeae (strain ATCC MYA-4620 / CBS 123657 / FGSC 9075 / NRRL 31084 / PH-1) (Wheat head blight fungus).